Reading from the N-terminus, the 305-residue chain is Putative monooxygenase p33MONOX (305 aa).

Residues 37–56 (LEDPAPMTPPPSDMGSVPWK) are disordered. T44 is modified (phosphothreonine). The Flavin-containing monooxygenase motif signature appears at 67-77 (LAKVEEGEASL). Disordered regions lie at residues 158–236 (QSGE…KYDS) and 259–305 (QANR…PTGF). Over residues 169–183 (PASAQSTPSTTPHSS) the composition is skewed to low complexity. At T175 the chain carries Phosphothreonine. S182 and S183 each carry phosphoserine. Over residues 193-210 (TSGSSTALPGPNPSTMDS) the composition is skewed to polar residues.

The protein belongs to the P33MONOX family. Interacts with NELFB, NOL12 and PRNP. In terms of tissue distribution, down-regulated in the occipital lobe of an early stage Alzheimer disease patients.

The protein localises to the cytoplasm. Its function is as follows. Potential NADPH-dependent oxidoreductase. May be involved in the regulation of neuronal survival, differentiation and axonal outgrowth. This is Putative monooxygenase p33MONOX (KIAA1191) from Homo sapiens (Human).